Here is a 226-residue protein sequence, read N- to C-terminus: MQAQALLHLLQLSSPSLPIGAYSYSQGLEAAIENGTVKDEVGARRWIIDVLHEVVARFEAPVLWRLLQAFETRDAAAVESWTERFIAARDTAEFRAETIQMGYSLGKLCSDLQLGDAEMLALLQAQTEVPLPTALAYAAVTLKVPAEAALLGMLFSWAENQVLVCVKSVPLGQVAGQRLLLSLQAELEVAAQVAQQLPDEELSNWSPGLSLLSMQHEVQYSRLYRS.

It belongs to the UreF family. UreD, UreF and UreG form a complex that acts as a GTP-hydrolysis-dependent molecular chaperone, activating the urease apoprotein by helping to assemble the nickel containing metallocenter of UreC. The UreE protein probably delivers the nickel.

It localises to the cytoplasm. Functionally, required for maturation of urease via the functional incorporation of the urease nickel metallocenter. This chain is Urease accessory protein UreF, found in Janthinobacterium sp. (strain Marseille) (Minibacterium massiliensis).